We begin with the raw amino-acid sequence, 406 residues long: Argininosuccinate synthase (406 aa).

ATP is bound by residues 11-19 and alanine 38; that span reads AYSGGLDTS. L-citrulline-binding residues include tyrosine 91 and serine 96. Glycine 121 contributes to the ATP binding site. Residues threonine 123, asparagine 127, and aspartate 128 each coordinate L-aspartate. L-citrulline is bound at residue asparagine 127. 5 residues coordinate L-citrulline: arginine 131, serine 181, serine 190, glutamate 266, and tyrosine 278.

Belongs to the argininosuccinate synthase family. Type 1 subfamily. As to quaternary structure, homotetramer.

The protein resides in the cytoplasm. It catalyses the reaction L-citrulline + L-aspartate + ATP = 2-(N(omega)-L-arginino)succinate + AMP + diphosphate + H(+). Its pathway is amino-acid biosynthesis; L-arginine biosynthesis; L-arginine from L-ornithine and carbamoyl phosphate: step 2/3. In Campylobacter lari (strain RM2100 / D67 / ATCC BAA-1060), this protein is Argininosuccinate synthase.